A 256-amino-acid polypeptide reads, in one-letter code: MAPGKKVAPAPFGAKSTKSNKAKNPLTHSTPKNFGIGQAVQPKRNLSRYVKWPEYVRLQRQKKILSIRLKVPPTIAQFQYTLDRNTAAETFKLFNKYRPETAAEKKERLTKEAAAIAEGKSKQDASPKPYAVKYGLNHVVSLIENKKAKLVLIANDVDPIELVVFLPALCKKMGVPYAIIKGKARLGTLVNQKTSAVAALTEVRAEDEAALAKLVSTIDANFADKYDEVKKHWGGGILGNKAQAKMDKRAKTSDSA.

The disordered stretch occupies residues 1–37; that stretch reads MAPGKKVAPAPFGAKSTKSNKAKNPLTHSTPKNFGIG.

It belongs to the eukaryotic ribosomal protein eL8 family. Component of the large ribosomal subunit (LSU). Mature yeast ribosomes consist of a small (40S) and a large (60S) subunit. The 40S small subunit contains 1 molecule of ribosomal RNA (18S rRNA) and 33 different proteins (encoded by 57 genes). The large 60S subunit contains 3 rRNA molecules (25S, 5.8S and 5S rRNA) and 46 different proteins (encoded by 81 genes).

Its subcellular location is the cytoplasm. In terms of biological role, component of the ribosome, a large ribonucleoprotein complex responsible for the synthesis of proteins in the cell. The small ribosomal subunit (SSU) binds messenger RNAs (mRNAs) and translates the encoded message by selecting cognate aminoacyl-transfer RNA (tRNA) molecules. The large subunit (LSU) contains the ribosomal catalytic site termed the peptidyl transferase center (PTC), which catalyzes the formation of peptide bonds, thereby polymerizing the amino acids delivered by tRNAs into a polypeptide chain. The nascent polypeptides leave the ribosome through a tunnel in the LSU and interact with protein factors that function in enzymatic processing, targeting, and the membrane insertion of nascent chains at the exit of the ribosomal tunnel. The protein is Large ribosomal subunit protein eL8B of Saccharomyces cerevisiae (strain ATCC 204508 / S288c) (Baker's yeast).